The chain runs to 97 residues: MSRPQVELLTRAGCAICVRVAEQLAELSSELGFDMMTIDVDVAASTGNPGLRAEFGDRLPVVLLDGREHSYWEVDEHRLRADIARSTFGSPPDKRLP.

This is an uncharacterized protein from Mycobacterium tuberculosis (strain CDC 1551 / Oshkosh).